The sequence spans 420 residues: 26S proteasome non-ATPase regulatory subunit 4 (420 aa).

Positions 1–174 constitute a VWFA domain; it reads MSQEATIIAV…TGSHLISVAP (174 aa). 3 UIM domains span residues 210–229, 255–274, and 288–307; these read AEDPDLLYALRVSMEDQRMR, SEEAMLQQALAMSMQMNNTE, and SEEDQIAYALRMSLQQMGEE. The segment at 392 to 420 is disordered; the sequence is RKAINALTKSQSQRGSKKDEKEDEDKQNS. Residues 407-420 are compositionally biased toward basic and acidic residues; it reads SKKDEKEDEDKQNS.

It belongs to the proteasome subunit S5A family. In terms of assembly, the 26S proteasome is composed of a core protease, known as the 20S proteasome, capped at one or both ends by the 19S regulatory complex (RC). The RC is composed of at least 18 different subunits in two subcomplexes, the base and the lid, which form the portions proximal and distal to the 20S proteolytic core, respectively.

Its function is as follows. Binds and presumably selects ubiquitin-conjugates for destruction. This Schistosoma mansoni (Blood fluke) protein is 26S proteasome non-ATPase regulatory subunit 4.